Here is a 95-residue protein sequence, read N- to C-terminus: Putative small ubiquitin-related modifier 7 (95 aa).

Residues serine 13–glycine 90 enclose the Ubiquitin-like domain. Glycine 90 participates in a covalent cross-link: Glycyl lysine isopeptide (Gly-Lys) (interchain with K-? in acceptor proteins).

The protein belongs to the ubiquitin family. SUMO subfamily. Interacts with SAE2, SCE1, SIZ1 and MMS21 Covalently attached to a number of proteins.

It is found in the nucleus. The protein resides in the cytoplasm. Its function is as follows. Ubiquitin-like protein which can be covalently attached to target lysines as a monomer. Does not seem to be involved in protein degradation and may function as an antagonist of ubiquitin in the degradation process. The sequence is that of Putative small ubiquitin-related modifier 7 (SUMO7) from Arabidopsis thaliana (Mouse-ear cress).